We begin with the raw amino-acid sequence, 666 residues long: Chaperone protein HtpG (666 aa).

An a; substrate-binding region spans residues 1 to 374; the sequence is MSELNPVDNQ…SADLPLNVSR (374 aa). A b region spans residues 375–593; the sequence is ELLQESRDVK…EGELSPQMIQ (219 aa). The c stretch occupies residues 594-666; that stretch reads MLKQMGQDVP…LRRVNELLMR (73 aa).

The protein belongs to the heat shock protein 90 family. In terms of assembly, homodimer.

The protein localises to the cytoplasm. In terms of biological role, molecular chaperone. Has ATPase activity. The protein is Chaperone protein HtpG of Psychrobacter cryohalolentis (strain ATCC BAA-1226 / DSM 17306 / VKM B-2378 / K5).